The sequence spans 440 residues: Mitochondrial translation factor 2 (440 aa).

The transit peptide at 1–15 (MIRTSSILKNCNYRY) directs the protein to the mitochondrion.

The protein resides in the mitochondrion matrix. In terms of biological role, required for the processing and/or for the stability of the CYTB and COX1 intron-containing pre-mRNAs and of the ATP6 transcript. Could be a stem-loop RNA-binding protein that plays a role in determining RNA stability. The sequence is that of Mitochondrial translation factor 2 (MTF2) from Saccharomyces cerevisiae (strain ATCC 204508 / S288c) (Baker's yeast).